Consider the following 315-residue polypeptide: Peroxidase 1 (315 aa).

Residues Met1–Ala21 form the signal peptide. Pyrrolidone carboxylic acid is present on Gln22. Disulfide bonds link Cys32–Cys107, Cys65–Cys70, Cys113–Cys310, and Cys193–Cys219. His63 (proton acceptor) is an active-site residue. Ca(2+) contacts are provided by Asp64, Val67, Gly69, Asp71, and Ser73. Pro155 lines the substrate pocket. The N-linked (GlcNAc...) asparagine glycan is linked to Asn158. A heme b-binding site is contributed by His186. Ca(2+) is bound at residue Thr187. Positions 234, 237, and 242 each coordinate Ca(2+). Asn265 carries an N-linked (GlcNAc...) asparagine glycan.

The protein belongs to the peroxidase family. Classical plant (class III) peroxidase subfamily. It depends on Ca(2+) as a cofactor. The cofactor is heme b.

The protein localises to the secreted. The enzyme catalyses 2 a phenolic donor + H2O2 = 2 a phenolic radical donor + 2 H2O. In terms of biological role, removal of H(2)O(2), oxidation of toxic reductants, biosynthesis and degradation of lignin, suberization, auxin catabolism, response to environmental stresses such as wounding, pathogen attack and oxidative stress. These functions might be dependent on each isozyme/isoform in each plant tissue. Involved in defense response to powdery meldew fungus. The sequence is that of Peroxidase 1 from Hordeum vulgare (Barley).